Reading from the N-terminus, the 341-residue chain is MDYKKSGVDIEAGYKSVELMKEAVKSTMREEVLGGIGGFSGAFSLAKIKEMEEPVLLSGTDGCGTKVKLAFIMDKHDTIGIDAVAMCVNDVVCAGGEPLFFLDYIACGKNYPEKIATIVGGVAEGCRQSECALIGGETAEHPGLMPQDEYDLAGFAVGVVDKKDLITGENIKPGDTLIGIASSGVHSNGFSLVRSVFTMTEESLNTYYDSLGKTLGEALLAPTKIYVKTMKEIKKAGVKVKGCSHITGGGFYENVPRMLPDGVKAVIKKDSYEVPPIFKMLAEDGNIEEHMMYNTFNMGIGLVLAVDPADVDTVMEAVKAAGETPYVIGSIEAGEKGVTLC.

The protein belongs to the AIR synthase family.

Its subcellular location is the cytoplasm. The catalysed reaction is 2-formamido-N(1)-(5-O-phospho-beta-D-ribosyl)acetamidine + ATP = 5-amino-1-(5-phospho-beta-D-ribosyl)imidazole + ADP + phosphate + H(+). Its pathway is purine metabolism; IMP biosynthesis via de novo pathway; 5-amino-1-(5-phospho-D-ribosyl)imidazole from N(2)-formyl-N(1)-(5-phospho-D-ribosyl)glycinamide: step 2/2. This chain is Phosphoribosylformylglycinamidine cyclo-ligase, found in Lachnospira eligens (strain ATCC 27750 / DSM 3376 / VPI C15-48 / C15-B4) (Eubacterium eligens).